A 346-amino-acid polypeptide reads, in one-letter code: S-adenosylmethionine:tRNA ribosyltransferase-isomerase (346 aa).

Belongs to the QueA family. As to quaternary structure, monomer.

Its subcellular location is the cytoplasm. It carries out the reaction 7-aminomethyl-7-carbaguanosine(34) in tRNA + S-adenosyl-L-methionine = epoxyqueuosine(34) in tRNA + adenine + L-methionine + 2 H(+). It participates in tRNA modification; tRNA-queuosine biosynthesis. In terms of biological role, transfers and isomerizes the ribose moiety from AdoMet to the 7-aminomethyl group of 7-deazaguanine (preQ1-tRNA) to give epoxyqueuosine (oQ-tRNA). The polypeptide is S-adenosylmethionine:tRNA ribosyltransferase-isomerase (Nitrosomonas eutropha (strain DSM 101675 / C91 / Nm57)).